The chain runs to 124 residues: Small ribosomal subunit protein uS12 (124 aa).

A 3-methylthioaspartic acid modification is found at D89.

It belongs to the universal ribosomal protein uS12 family. Part of the 30S ribosomal subunit. Contacts proteins S8 and S17. May interact with IF1 in the 30S initiation complex.

With S4 and S5 plays an important role in translational accuracy. Its function is as follows. Interacts with and stabilizes bases of the 16S rRNA that are involved in tRNA selection in the A site and with the mRNA backbone. Located at the interface of the 30S and 50S subunits, it traverses the body of the 30S subunit contacting proteins on the other side and probably holding the rRNA structure together. The combined cluster of proteins S8, S12 and S17 appears to hold together the shoulder and platform of the 30S subunit. The protein is Small ribosomal subunit protein uS12 of Shewanella sp. (strain ANA-3).